A 397-amino-acid chain; its full sequence is Xylose isomerase (397 aa).

Active-site residues include His-54 and Asp-57. Mg(2+)-binding residues include Glu-181, Glu-217, His-220, Asp-245, Asp-255, Asp-257, and Asp-293.

It belongs to the xylose isomerase family. As to quaternary structure, homotetramer. Mg(2+) is required as a cofactor.

The protein resides in the cytoplasm. It carries out the reaction alpha-D-xylose = alpha-D-xylulofuranose. In Clavibacter sepedonicus (Clavibacter michiganensis subsp. sepedonicus), this protein is Xylose isomerase.